A 603-amino-acid chain; its full sequence is Serine/threonine-protein kinase PLK1 (603 aa).

Lysine 19 participates in a covalent cross-link: Glycyl lysine isopeptide (Lys-Gly) (interchain with G-Cter in ubiquitin). A Protein kinase domain is found at 53–305 (YVRGRFLGKG…IHELLNDEFF (253 aa)). ATP-binding positions include 59–67 (LGKGGFAKC) and lysine 82. The residue at position 103 (serine 103) is a Phosphoserine. Glutamate 131 lines the ATP pocket. Phosphoserine is present on serine 137. Aspartate 176 functions as the Proton acceptor in the catalytic mechanism. Residues 178–181 (KLGN) and aspartate 194 contribute to the ATP site. The segment at 194-221 (DFGLATKVEYEGERKKTLCGTPNYIAPE) is activation loop. Threonine 210 carries the phosphothreonine; by AURKA modification. Threonine 214 is subject to Phosphothreonine. Serine 269 and serine 335 each carry phosphoserine; by autocatalysis. The short motif at 337 to 340 (RKPL) is the D-box that targets the protein for proteasomal degradation in anaphase element. Lysine 338 is covalently cross-linked (Glycyl lysine isopeptide (Lys-Gly) (interchain with G-Cter in SUMO2)). 2 positions are modified to phosphoserine: serine 375 and serine 450. The POLO box 1 domain occupies 410–488 (WVSKWVDYSD…LNYFRNYMSE (79 aa)). Lysine 492 participates in a covalent cross-link: Glycyl lysine isopeptide (Lys-Gly) (interchain with G-Cter in ubiquitin). The segment at 493–507 (AGANITPREGDELAR) is linker. Residue threonine 498 is modified to Phosphothreonine. The 83-residue stretch at 510-592 (YLRTWFRTRS…ARTMVDKLLS (83 aa)) folds into the POLO box 2 domain. The segment at 538 to 540 (HTK) is important for interaction with phosphorylated proteins.

It belongs to the protein kinase superfamily. Ser/Thr protein kinase family. CDC5/Polo subfamily. In terms of assembly, interacts with CEP170 and EVI5. Interacts and phosphorylates ERCC6L. Interacts with FAM29A. Interacts with SLX4/BTBD12 and TTDN1. Interacts with BUB1B. Interacts (via POLO-box domain) with the phosphorylated form of BUB1, CENPU and CDC25C. Interacts with isoform 3 of SGO1. Interacts with BORA, KIF2A and AURKA. Interacts with TOPORS and CYLD. Interacts with ECT2; the interaction is stimulated upon phosphorylation of ECT2 on 'Thr-444'. Interacts with PRC1. Interacts with KIF20A/MKLP2 (when phosphorylated), leading to the recruitment at the central spindle. Interacts (via POLO box domains) with PPP1R12A/MYPT1 (when previously phosphorylated by CDK1). Part of an astrin (SPAG5)-kinastrin (SKAP) complex containing KNSTRN, SPAG5, PLK1, DYNLL1 and SGO2A. Interacts with BIRC6/bruce. Interacts with CDK1-phosphorylated DCTN6 during mitotic prometaphase; the interaction facilitates recruitment to kinetochores. Interacts with CDK1-phosphorylated FRY; this interaction occurs in mitotic cells, but not in interphase cells. FRY interaction facilitates AURKA-mediated PLK1 phosphorylation. Interacts with CEP68; the interaction phosphorylates CEP68. Interacts (via POLO-box domain) with DCTN1. Interacts with CEP20 in later G1, S, G2 and M phases of the cell cycle; this interaction recruits PLK1 to centrosomes, a step required for S phase progression. Interacts with HSF1; this interaction increases upon heat shock but does not modulate neither HSF1 homotrimerization nor DNA-binding activities. Interacts with HNRNPU; this interaction induces phosphorylation of HNRNPU in mitosis. Interacts (via its N-terminus) with RIOK2. Interacts with KLHL22. Interacts (via POLO box domains) with NEDD9/HEF1 (via C-terminus). Interacts (via RVxF motif) with FIRRM; regulates PLK1 kinase activity. Interacts with SKA3; the interaction promotes the stability of PLK1. Interacts with the MTMR3:MTMR4 heterooligomer; brings CEP55 and PLK1 together during early mitosis, regulating the phosphorylation of CEP55 by PLK1 and its recruitment to the midbody where it can mediate cell abscission. In terms of processing, catalytic activity is enhanced by phosphorylation of Thr-210. Phosphorylation at Thr-210 is first detected on centrosomes in the G2 phase of the cell cycle, peaks in prometaphase and gradually disappears from centrosomes during anaphase. Dephosphorylation at Thr-210 at centrosomes is probably mediated by protein phosphatase 1C (PP1C), via interaction with PPP1R12A/MYPT1. Autophosphorylation and phosphorylation of Ser-137 may not be significant for the activation of PLK1 during mitosis, but may enhance catalytic activity during recovery after DNA damage checkpoint. Phosphorylated in vitro by STK10. Ubiquitinated by the anaphase promoting complex/cyclosome (APC/C) in anaphase and following DNA damage, leading to its degradation by the proteasome. Ubiquitination is mediated via its interaction with FZR1/CDH1. Ubiquitination and subsequent degradation prevents entry into mitosis and is essential to maintain an efficient G2 DNA damage checkpoint. Monoubiquitination at Lys-492 by the BCR(KLHL22) ubiquitin ligase complex does not lead to degradation: it promotes PLK1 dissociation from phosphoreceptor proteins and subsequent removal from kinetochores, allowing silencing of the spindle assembly checkpoint (SAC) and chromosome segregation. Newborn and adult spleen, fetal and newborn kidney, liver, brain, thymus and adult bone marrow, thymus, ovary and testes.

Its subcellular location is the nucleus. It is found in the chromosome. It localises to the centromere. The protein localises to the kinetochore. The protein resides in the cytoplasm. Its subcellular location is the cytoskeleton. It is found in the microtubule organizing center. It localises to the centrosome. The protein localises to the spindle. The protein resides in the midbody. It catalyses the reaction L-seryl-[protein] + ATP = O-phospho-L-seryl-[protein] + ADP + H(+). The catalysed reaction is L-threonyl-[protein] + ATP = O-phospho-L-threonyl-[protein] + ADP + H(+). With respect to regulation, activated by phosphorylation of Thr-210 by AURKA; phosphorylation by AURKA is enhanced by BORA. Once activated, activity is stimulated by binding target proteins. Binding of target proteins has no effect on the non-activated kinase. Several inhibitors targeting PLKs are currently in development and are under investigation in a growing number of clinical trials, such as BI 2536, an ATP-competitive PLK1 inhibitor or BI 6727, a dihydropteridinone that specifically inhibits the catalytic activity of PLK1. Its function is as follows. Serine/threonine-protein kinase that performs several important functions throughout M phase of the cell cycle, including the regulation of centrosome maturation and spindle assembly, the removal of cohesins from chromosome arms, the inactivation of anaphase-promoting complex/cyclosome (APC/C) inhibitors, and the regulation of mitotic exit and cytokinesis. Polo-like kinase proteins act by binding and phosphorylating proteins that are already phosphorylated on a specific motif recognized by the POLO box domains. Phosphorylates BORA, BUB1B/BUBR1, CCNB1, CDC25C, CEP55, ECT2, ERCC6L, FBXO5/EMI1, FOXM1, KIF20A/MKLP2, CENPU, NEDD1, NINL, NPM1, NUDC, PKMYT1/MYT1, KIZ, MRE11, PPP1R12A/MYPT1, POLQ, PRC1, RACGAP1/CYK4, RAD51, RHNO1, SGO1, STAG2/SA2, TEX14, TOPORS, p73/TP73, TPT1, WEE1 and HNRNPU. Plays a key role in centrosome functions and the assembly of bipolar spindles by phosphorylating KIZ, NEDD1 and NINL. NEDD1 phosphorylation promotes subsequent targeting of the gamma-tubulin ring complex (gTuRC) to the centrosome, an important step for spindle formation. Phosphorylation of NINL component of the centrosome leads to NINL dissociation from other centrosomal proteins. Involved in mitosis exit and cytokinesis by phosphorylating CEP55, ECT2, KIF20A/MKLP2, CENPU, PRC1 and RACGAP1. Recruited at the central spindle by phosphorylating and docking PRC1 and KIF20A/MKLP2; creates its own docking sites on PRC1 and KIF20A/MKLP2 by mediating phosphorylation of sites subsequently recognized by the POLO box domains. Phosphorylates RACGAP1, thereby creating a docking site for the Rho GTP exchange factor ECT2 that is essential for the cleavage furrow formation. Promotes the central spindle recruitment of ECT2. Plays a central role in G2/M transition of mitotic cell cycle by phosphorylating CCNB1, CDC25C, FOXM1, CENPU, PKMYT1/MYT1, PPP1R12A/MYPT1 and WEE1. Part of a regulatory circuit that promotes the activation of CDK1 by phosphorylating the positive regulator CDC25C and inhibiting the negative regulators WEE1 and PKMYT1/MYT1. Also acts by mediating phosphorylation of cyclin-B1 (CCNB1) on centrosomes in prophase. Phosphorylates FOXM1, a key mitotic transcription regulator, leading to enhance FOXM1 transcriptional activity. Involved in kinetochore functions and sister chromatid cohesion by phosphorylating BUB1B/BUBR1, FBXO5/EMI1 and STAG2/SA2. PLK1 is high on non-attached kinetochores suggesting a role of PLK1 in kinetochore attachment or in spindle assembly checkpoint (SAC) regulation. Required for kinetochore localization of BUB1B. Regulates the dissociation of cohesin from chromosomes by phosphorylating cohesin subunits such as STAG2/SA2. Phosphorylates SGO1: required for spindle pole localization of isoform 3 of SGO1 and plays a role in regulating its centriole cohesion function. Mediates phosphorylation of FBXO5/EMI1, a negative regulator of the APC/C complex during prophase, leading to FBXO5/EMI1 ubiquitination and degradation by the proteasome. Acts as a negative regulator of p53 family members: phosphorylates TOPORS, leading to inhibit the sumoylation of p53/TP53 and simultaneously enhance the ubiquitination and subsequent degradation of p53/TP53. Phosphorylates the transactivation domain of the transcription factor p73/TP73, leading to inhibit p73/TP73-mediated transcriptional activation and pro-apoptotic functions. Phosphorylates BORA, and thereby promotes the degradation of BORA. Contributes to the regulation of AURKA function. Also required for recovery after DNA damage checkpoint and entry into mitosis. Phosphorylates MISP, leading to stabilization of cortical and astral microtubule attachments required for proper spindle positioning. Together with MEIKIN, acts as a regulator of kinetochore function during meiosis I: required both for mono-orientation of kinetochores on sister chromosomes and protection of centromeric cohesin from separase-mediated cleavage. Phosphorylates CEP68 and is required for its degradation. Regulates nuclear envelope breakdown during prophase by phosphorylating DCTN1 resulting in its localization in the nuclear envelope. Phosphorylates the heat shock transcription factor HSF1, promoting HSF1 nuclear translocation upon heat shock. Phosphorylates HSF1 also in the early mitotic period; this phosphorylation regulates HSF1 localization to the spindle pole, the recruitment of the SCF(BTRC) ubiquitin ligase complex induicing HSF1 degradation, and hence mitotic progression. Regulates mitotic progression by phosphorylating RIOK2. Through the phosphorylation of DZIP1 regulates the localization during mitosis of the BBSome, a ciliary protein complex involved in cilium biogenesis. Regulates DNA repair during mitosis by mediating phosphorylation of POLQ and RHNO1, thereby promoting POLQ recruitment to DNA damage sites. Phosphorylates ATXN10 which may play a role in the regulation of cytokinesis and may stimulate the proteasome-mediated degradation of ATXN10. This chain is Serine/threonine-protein kinase PLK1 (Plk1), found in Mus musculus (Mouse).